The following is a 596-amino-acid chain: Transcription factor EGL1 (596 aa).

The region spanning 401–450 (EETGNHALSEKKRREKLNERFMTLRSIIPSISKIDKVSILDDTIEYLQDL) is the bHLH domain.

As to quaternary structure, efficient DNA binding requires dimerization with another bHLH protein. Homodimer and heterodimer with GL3. Interacts with CPC, MYB0/GL1, MYB5, MYB23, MYB113, MYB114, MYB75/PAP1, MYB90/PAP2, TT2, TRY, TTG1 and MYB66/WER. Ubiquitous with higher levels in buds and flowers. Specifically localized in developing root hair cells. Expressed in epidermal root hair cells (trichoblasts) and moves to root hairless cells (atrichoblasts) by a cell-to-cell movement through plasmodesmata (at protein level).

The protein resides in the nucleus. Transcription activator, when associated with MYB75/PAP1, MYB90/PAP2 or TT2. Involved in epidermal cell fate specification. Negatively regulates stomata formation but promotes trichome formation. Together with MYB66/WER, promotes the formation of non-hair cells in root epidermis cells in the N position. Whereas together with CPC, promotes the formation of hair cells in root epidermis cells in the H position by inhibiting non-hair cell formation. Also seems to play a role in the activation of anthocyanin biosynthesis, probably together with MYB75/PAP1. Involved in seed mucilage production. Activates the transcription of GL2. This chain is Transcription factor EGL1 (BHLH2), found in Arabidopsis thaliana (Mouse-ear cress).